A 183-amino-acid polypeptide reads, in one-letter code: tRNA-splicing endonuclease (183 aa).

Active-site residues include Tyr120, His128, and Lys159.

Belongs to the tRNA-intron endonuclease family. Archaeal short subfamily. As to quaternary structure, homotetramer; although the tetramer contains four active sites, only two participate in the cleavage. Therefore, it should be considered as a dimer of dimers.

The catalysed reaction is pretRNA = a 3'-half-tRNA molecule with a 5'-OH end + a 5'-half-tRNA molecule with a 2',3'-cyclic phosphate end + an intron with a 2',3'-cyclic phosphate and a 5'-hydroxyl terminus.. Endonuclease that removes tRNA introns. Cleaves pre-tRNA at the 5'- and 3'-splice sites to release the intron. The products are an intron and two tRNA half-molecules bearing 2',3' cyclic phosphate and 5'-OH termini. Recognizes a pseudosymmetric substrate in which 2 bulged loops of 3 bases are separated by a stem of 4 bp. The polypeptide is tRNA-splicing endonuclease (Pyrobaculum arsenaticum (strain DSM 13514 / JCM 11321 / PZ6)).